A 323-amino-acid chain; its full sequence is Cysteine synthase A (323 aa).

Positions 8 and 35 each coordinate hydrogen sulfide. Lys42 is subject to N6-(pyridoxal phosphate)lysine. Pyridoxal 5'-phosphate-binding positions include Asn72 and 177-181 (GTGGT). Leu269 serves as a coordination point for hydrogen sulfide. Ser273 contributes to the pyridoxal 5'-phosphate binding site.

The protein belongs to the cysteine synthase/cystathionine beta-synthase family. As to quaternary structure, homodimer. Requires pyridoxal 5'-phosphate as cofactor.

It carries out the reaction O-acetyl-L-serine + hydrogen sulfide = L-cysteine + acetate. It functions in the pathway amino-acid biosynthesis; L-cysteine biosynthesis; L-cysteine from L-serine: step 2/2. Functionally, two cysteine synthase enzymes are found. Both catalyze the same reaction. Cysteine synthase B can also use thiosulfate in place of sulfide to give cysteine thiosulfonate as a product. This chain is Cysteine synthase A (cysK), found in Salmonella typhi.